A 444-amino-acid chain; its full sequence is Tubulin beta-2 chain (444 aa).

GTP contacts are provided by Gln11, Glu69, Ser138, Gly142, Thr143, Gly144, Asn204, and Asn226. A Mg(2+)-binding site is contributed by Glu69.

This sequence belongs to the tubulin family. Dimer of alpha and beta chains. A typical microtubule is a hollow water-filled tube with an outer diameter of 25 nm and an inner diameter of 15 nM. Alpha-beta heterodimers associate head-to-tail to form protofilaments running lengthwise along the microtubule wall with the beta-tubulin subunit facing the microtubule plus end conferring a structural polarity. Microtubules usually have 13 protofilaments but different protofilament numbers can be found in some organisms and specialized cells. It depends on Mg(2+) as a cofactor.

The protein localises to the cytoplasm. Its subcellular location is the cytoskeleton. In terms of biological role, tubulin is the major constituent of microtubules, a cylinder consisting of laterally associated linear protofilaments composed of alpha- and beta-tubulin heterodimers. Microtubules grow by the addition of GTP-tubulin dimers to the microtubule end, where a stabilizing cap forms. Below the cap, tubulin dimers are in GDP-bound state, owing to GTPase activity of alpha-tubulin. This is Tubulin beta-2 chain (TUBB2) from Zea mays (Maize).